Reading from the N-terminus, the 397-residue chain is Purine ribonucleoside efflux pump NepI (397 aa).

Topologically, residues 1 to 21 are cytoplasmic; the sequence is MNENIAEKFRADGVARPNWSA. Residues 22–42 traverse the membrane as a helical segment; the sequence is VFAVAFCVACLITVEFLPVSL. The Periplasmic portion of the chain corresponds to 43-54; the sequence is LTPMAQDLGISE. A helical membrane pass occupies residues 55 to 75; it reads GIAGQSVTVTAFVAMFSSLFI. The Cytoplasmic portion of the chain corresponds to 76–85; sequence TQIIQATDRR. The helical transmembrane segment at 86 to 106 threads the bilayer; it reads YIVILFAVLLTASCLMVSFAN. A topological domain (periplasmic) is located at residue Ser107. A helical transmembrane segment spans residues 108–128; sequence FTLLLLGRACLGLALGGFWAM. At 129–147 the chain is on the cytoplasmic side; the sequence is SASLTMRLVPARTVPKALS. A helical membrane pass occupies residues 148 to 168; sequence VIFGAVSIALVIAAPLGSFLG. Residues 169-175 lie on the Periplasmic side of the membrane; sequence GIIGWRN. The helical transmembrane segment at 176-196 threads the bilayer; that stretch reads VFNAAAVMGVLCVIWVVKSLP. Over 197–215 the chain is Cytoplasmic; the sequence is SLPGEPSHQKQNMFSLLQR. A helical transmembrane segment spans residues 216–236; the sequence is PGVMAGMIAIFMSFAGQFAFF. Over 237–255 the chain is Periplasmic; it reads TYIRPVYMNLAGFDVDGLT. The chain crosses the membrane as a helical span at residues 256–276; sequence LVLLSFGIASFVGTSFSSYVL. At 277-281 the chain is on the cytoplasmic side; that stretch reads KRSVK. The helical transmembrane segment at 282 to 302 threads the bilayer; sequence LALAGAPLLLALSALTLIVWG. Residues 303–305 are Periplasmic-facing; the sequence is SDK. The chain crosses the membrane as a helical span at residues 306–326; sequence TVAAVIAIIWGLAFALVPVGW. The Cytoplasmic portion of the chain corresponds to 327-343; sequence STWITRSLADQAEKAGS. Residues 344 to 364 form a helical membrane-spanning segment; that stretch reads IQVAVIQLANTCGAAVGGYAL. Topologically, residues 365–366 are periplasmic; the sequence is DN. The helical transmembrane segment at 367–387 threads the bilayer; that stretch reads FGLLSPLALSGCLMLLTALVV. At 388 to 397 the chain is on the cytoplasmic side; it reads AAKVRITPMS.

It belongs to the major facilitator superfamily. DHA1 family. NepI (TC 2.A.1.2.26) subfamily.

The protein localises to the cell inner membrane. It carries out the reaction inosine(in) + H(+)(out) = inosine(out) + H(+)(in). The catalysed reaction is guanosine(in) + H(+)(out) = guanosine(out) + H(+)(in). Functionally, involved in the efflux of purine ribonucleosides, such as inosine and guanosine. The chain is Purine ribonucleoside efflux pump NepI from Salmonella enteritidis PT4 (strain P125109).